Reading from the N-terminus, the 795-residue chain is ATP-dependent RNA helicase DHX15 (795 aa).

The segment at 1 to 108 is disordered; it reads MSKRHRLDLG…HSTHAGHAGH (108 aa). A Phosphoserine modification is found at serine 15. The segment covering 20 to 62 has biased composition (basic and acidic residues); it reads AGTDGKDRDRDRDREDRSKDRDRERDRGDREREREKEKEKELR. Over residues 79 to 108 the composition is skewed to low complexity; the sequence is ASHSAHSTHSAHSAHSTHSAHSTHAGHAGH. The Helicase ATP-binding domain occupies 147–313; it reads TDILVRHQSF…FDNCPLLTIP (167 aa). Position 160 to 167 (160 to 167) interacts with ATP; that stretch reads GETGSGKT. Residues 260 to 263 carry the DEAH box motif; that stretch reads DEAH. The 181-residue stretch at 338–518 folds into the Helicase C-terminal domain; that stretch reads TVIQIHMCEE…SVVLQLKKLG (181 aa). Lysine 488 carries the post-translational modification N6-acetyllysine. A Glycyl lysine isopeptide (Lys-Gly) (interchain with G-Cter in SUMO2) cross-link involves residue lysine 786.

This sequence belongs to the DEAD box helicase family. DEAH subfamily. DDX15/PRP43 sub-subfamily. Component of the U11/U12 snRNPs that are part of the U12-type spliceosome. Identified in the Intron Large spliceosome complex (IL, also named intron lariat spliceosome), a post-mRNA release spliceosomal complex containing the excised intron, U2, U5 and U6 snRNPs, and splicing factors; the association may be transient. The IL complex exists in two distinct conformations, one with the DHX15 (ILS2) and one without (ILS1). Interacts with TFIP11 (via G-patch domain); indicative for a recruitment to the IL complex. Interacts with SSB/La. Interacts with GPATCH2 (via G-patch domain); promoting the RNA helicase activity. Interacts with NKRF (via G-patch domain); promoting the RNA helicase activity. Interacts with NLRP6.

The protein localises to the nucleus. The protein resides in the nucleolus. The catalysed reaction is ATP + H2O = ADP + phosphate + H(+). Its activity is regulated as follows. ATPase activity is enhanced upon binding to G-patch domain-containing proteins. G-patch domain-containing proteins act like a brace that tethers mobile sections of DHX15 together, stabilizing a functional conformation with high RNA affinity, thereby promoting the ATPase activity. Its function is as follows. RNA helicase involved in mRNA processing and antiviral innate immunity. Pre-mRNA processing factor involved in disassembly of spliceosomes after the release of mature mRNA. In cooperation with TFIP11 seem to be involved in the transition of the U2, U5 and U6 snRNP-containing IL complex to the snRNP-free IS complex leading to efficient debranching and turnover of excised introns. Plays a key role in antiviral innate immunity by promoting both MAVS-dependent signaling and NLRP6 inflammasome. Acts as an RNA virus sensor: recognizes and binds viral double stranded RNA (dsRNA) and activates the MAVS-dependent signaling to produce interferon-beta and interferon lambda-3 (IFNL3). Involved in intestinal antiviral innate immunity together with NLRP6: recognizes and binds viral dsRNA and promotes activation of the NLRP6 inflammasome in intestinal epithelial cells to restrict infection by enteric viruses. The NLRP6 inflammasome acts by promoting maturation and secretion of IL18 in the extracellular milieu. Also involved in antibacterial innate immunity by promoting Wnt-induced antimicrobial protein expression in Paneth cells. This Pongo abelii (Sumatran orangutan) protein is ATP-dependent RNA helicase DHX15.